Reading from the N-terminus, the 233-residue chain is Ribose-5-phosphate isomerase A (233 aa).

Residues 28-31 (TGST), 83-86 (DGAD), and 96-99 (KGGG) each bind substrate. Glutamate 105 (proton acceptor) is an active-site residue. Position 123 (lysine 123) interacts with substrate.

The protein belongs to the ribose 5-phosphate isomerase family. Homodimer.

It carries out the reaction aldehydo-D-ribose 5-phosphate = D-ribulose 5-phosphate. It participates in carbohydrate degradation; pentose phosphate pathway; D-ribose 5-phosphate from D-ribulose 5-phosphate (non-oxidative stage): step 1/1. In terms of biological role, catalyzes the reversible conversion of ribose-5-phosphate to ribulose 5-phosphate. This is Ribose-5-phosphate isomerase A from Rhizobium rhizogenes (strain K84 / ATCC BAA-868) (Agrobacterium radiobacter).